The primary structure comprises 388 residues: MLKMSRNEVLLYALVISAFLSISLFEGFVILTLLLVLYKILKERKIKGSLTPGILLYSLSTVLSTAIFYPKRFLKGIEEGLFQFIYFLNLKKEEVKGFSKIFPKLLLGISLILLPVVFYKFYKYGEPKPIWGGTFEVGFFYALFSITTFLLFFKERRFIYIPLFLLFLAVIFLSARRSMMLAFFVIFYLILFVLFKSKKLGKLAFWSVNFLIILSFIGGYVYLSQKDHRFKTLNDIILGKKELNYQNLNSISSGRLNLLLEGISIIKEDIENKRFINLLIGHGVRAGEYMPHRYGMTQHRYESIFIVSEFIERGILGLLGILYIYFMYFKKVLSFRIKREEDIYTYLLSVPLGLHLIQSVFTFFWDALLPLYLLLFKAFETLQDERKP.

Transmembrane regions (helical) follow at residues Val-15 to Leu-37, Gly-97 to Tyr-119, Pro-129 to Leu-151, Phe-158 to Ala-175, Met-179 to Lys-196, Leu-203 to Gln-225, Ile-304 to Phe-326, and Leu-347 to Leu-369.

It is found in the cell membrane. This is an uncharacterized protein from Aquifex aeolicus (strain VF5).